Consider the following 229-residue polypeptide: Cytochrome b translational activator protein CBS1, mitochondrial (229 aa).

A mitochondrion-targeting transit peptide spans 1–25 (MLRTKVFATTVARISGIRRYIPIRT).

It is found in the mitochondrion inner membrane. In terms of biological role, mRNA-specific translational activator of cytochrome b. The cytochrome b (COB) leader RNA may represent the target sequence for CBS1 and CBS2, tethering the COB mRNA to the inner mitochondrial membrane, where cotranslational insertion of cytochrome b into the membrane can occur. The chain is Cytochrome b translational activator protein CBS1, mitochondrial (CBS1) from Saccharomyces cerevisiae (strain ATCC 204508 / S288c) (Baker's yeast).